The chain runs to 317 residues: Ribosomal protein L11 methyltransferase (317 aa).

S-adenosyl-L-methionine-binding residues include threonine 158, glycine 179, aspartate 201, and asparagine 244.

This sequence belongs to the methyltransferase superfamily. PrmA family.

It is found in the cytoplasm. The enzyme catalyses L-lysyl-[protein] + 3 S-adenosyl-L-methionine = N(6),N(6),N(6)-trimethyl-L-lysyl-[protein] + 3 S-adenosyl-L-homocysteine + 3 H(+). Methylates ribosomal protein L11. This Streptococcus equi subsp. zooepidemicus (strain H70) protein is Ribosomal protein L11 methyltransferase.